Consider the following 404-residue polypeptide: MHSKPQRALVIGATGVSGWSLCLQLLQTQTPSAFESVDLLTNRPVSLSDAQWPTDSRLRVHSGIDLNRTSEEVIGSFRGIPDIGEITHVFYVACGMSPTYDFAETAKINVQMTKAALDAIEAVAVCTKHISFQAGSIVYGIPFADWLGDNFRPGPFNESFARVPPPFSDMVSHYRQEDYVKAMADKNSWTWSSIRPDTIIGFTPRNSPHCLSVSLGLYFAFYRYVYGKGAVLHFPGSESAWKADFTVIGQDQLARFHIFTSTHAASNGTPGALNISNGETTSWEQIWPKIVQYFDLVGAPPEPKMAEGDSDDASSPRFGPEWFQGVTAKATEFEAEYGLQPDFVTNIAWQYLTFLLNLKIDRVLDIEKARDLGFLESSNTVSDFEKSWDHMRKARIIPSVEQSD.

An N-terminal signal peptide occupies residues 1–28 (MHSKPQRALVIGATGVSGWSLCLQLLQT). Residues S56 and L58 each contribute to the NADP(+) site. Residues N67 and N157 are each glycosylated (N-linked (GlcNAc...) asparagine). The Proton donor role is filled by S237. A glycan (N-linked (GlcNAc...) asparagine) is linked at N274. V291 lines the NADP(+) pocket.

This sequence belongs to the short-chain dehydrogenases/reductases (SDR) family. Highly divergent.

It functions in the pathway mycotoxin biosynthesis. In terms of biological role, short chain dehydrogenase; part of the gene cluster that mediates the biosynthesis of sirodesmin PL, an epipolythiodioxopiperazine (ETP) characterized by a disulfide bridged cyclic dipeptide and that acts as a phytotoxin which is involved in the blackleg didease of canola. SirD catalyzes the O-prenylation of L-tyrosine (L-Tyr) in the presence of dimethylallyl diphosphate (DMAPP) to yield 4-O-dimethylallyl-L-Tyr, and therefore represents probably the first pathway-specific enzyme in the biosynthesis of sirodesmin PL. 4-O-dimethylallyl-L-Tyr, then undergoes condensation with L-Ser in a reaction catalyzed by the non-ribosomal peptide synthase sirP to form the diketopiperazine (DKP) backbone. Further bishydroxylation of the DKP performed by the cytochrome P450 monooxygenase sirC leads to the production of the intermediate phomamide. This step is essential to form the reactive thiol group required for toxicity of sirodesmin PL. The next steps of sirodesmin biosynthesis are not well understood yet, but some predictions could be made from intermediate compounds identification. Phomamide is converted into phomalizarine via oxidation, probably by sirT. Further oxidation, methylation (by sirM or sirN) and reduction steps convert phomalizarine to deacetyl sirodesmin. Finally, acetyltransferase sirH probably acetylates deacetyl sirodesmin to produce sirodesmin PL. The chain is Short chain dehydrogenase sirR from Leptosphaeria maculans (Blackleg fungus).